A 354-amino-acid chain; its full sequence is Guanine nucleotide-binding protein alpha-2 subunit (354 aa).

A G-alpha domain is found at 33–354; the sequence is KIYKVLLLGA…QHSLKEAGMF (322 aa). The segment at 36-49 is G1 motif; sequence KVLLLGASDSGKST. Residues D44, S45, G46, K47, S48, T49, D148, L173, T179, G201, N269, K270, D272, and A326 each contribute to the GTP site. A Mg(2+)-binding site is contributed by S48. The segment at 171 to 179 is G2 motif; the sequence is DILRSRNST. Residue T179 participates in Mg(2+) binding. The interval 194–203 is G3 motif; the sequence is IRMFDVGGQR. Positions 265-272 are G4 motif; it reads ILFLNKFD. The tract at residues 324 to 329 is G5 motif; the sequence is TTAVDT.

The protein belongs to the G-alpha family. G proteins are composed of 3 units; alpha, beta and gamma. Binding of the beta-gamma subunit complex (git5-git11) to the alpha subunit (gpa2) facilitates interaction with GPCR git3. Interacts with GPCR git3; the interaction is direct and leads to activation of gpa2 upon glucose stimulation. Interacts with adenylate cyclase cyr1 (via N-terminus); the interaction is direct and serves to activate adenylate cyclase and cAMP-PKA signaling, to repress sexual development and gluconeogenesis. It depends on Mg(2+) as a cofactor.

Its subcellular location is the cell membrane. In terms of biological role, alpha subunit of the heterotrimeric guanine nucleotide-binding protein (G protein) involved in glucose-induced cAMP signaling. Binds to its cognate transmembrane receptor git3, which senses extracellular glucose, and activates cAMP-PKA signaling to repress sexual development and gluconeogenesis. The chain is Guanine nucleotide-binding protein alpha-2 subunit from Schizosaccharomyces pombe (strain 972 / ATCC 24843) (Fission yeast).